Here is a 205-residue protein sequence, read N- to C-terminus: Beta-crystallin B2 (205 aa).

A2 bears the N-acetylalanine mark. An N-terminal arm region spans residues 2–16; sequence ASDHQTQAGKPQSLN. Beta/gamma crystallin 'Greek key' domains are found at residues 17–56 and 57–101; these read PKII…LVQA and GPWV…RPIK. Positions 102-106 are connecting peptide; the sequence is VDSQE. Beta/gamma crystallin 'Greek key' domains lie at 107-148 and 149-191; these read HKII…RVQS and GTWV…RRIR. The interval 193 to 205 is C-terminal arm; sequence MQWHQRGAFHPSN.

This sequence belongs to the beta/gamma-crystallin family. In terms of assembly, homo/heterodimer, or complexes of higher-order. The structure of beta-crystallin oligomers seems to be stabilized through interactions between the N-terminal arms.

In terms of biological role, crystallins are the dominant structural components of the vertebrate eye lens. The chain is Beta-crystallin B2 (CRYBB2) from Homo sapiens (Human).